Reading from the N-terminus, the 172-residue chain is Putative phosphoesterase BCE_1348 (172 aa).

His-34 serves as the catalytic Proton donor. Short sequence motifs (HXTX) lie at residues 34-37 (HITL) and 115-118 (HLTI). His-115 acts as the Proton acceptor in catalysis.

The protein belongs to the 2H phosphoesterase superfamily. YjcG family.

The sequence is that of Putative phosphoesterase BCE_1348 from Bacillus cereus (strain ATCC 10987 / NRS 248).